A 485-amino-acid polypeptide reads, in one-letter code: Glutamate--tRNA ligase (485 aa).

The short motif at 12 to 22 (PSPTGEPHVGT) is the 'HIGH' region element. Residues Cys109, Cys111, Cys136, and His138 each contribute to the Zn(2+) site. The short motif at 253–257 (KLSKR) is the 'KMSKS' region element. Lys256 lines the ATP pocket.

The protein belongs to the class-I aminoacyl-tRNA synthetase family. Glutamate--tRNA ligase type 1 subfamily. Monomer. Zn(2+) serves as cofactor.

It localises to the cytoplasm. The enzyme catalyses tRNA(Glu) + L-glutamate + ATP = L-glutamyl-tRNA(Glu) + AMP + diphosphate. Its function is as follows. Catalyzes the attachment of glutamate to tRNA(Glu) in a two-step reaction: glutamate is first activated by ATP to form Glu-AMP and then transferred to the acceptor end of tRNA(Glu). This is Glutamate--tRNA ligase from Agrobacterium fabrum (strain C58 / ATCC 33970) (Agrobacterium tumefaciens (strain C58)).